Here is a 473-residue protein sequence, read N- to C-terminus: Sulfate adenylyltransferase subunit 1 (473 aa).

The tr-type G domain occupies 19 to 238 (KTLLKFLTCG…IKIKNSISSE (220 aa)). Residues 28-35 (GSVDDGKS) form a G1 region. 28–35 (GSVDDGKS) contacts GTP. The interval 86 to 90 (GITID) is G2. The G3 stretch occupies residues 107 to 110 (DTPG). GTP-binding positions include 107-111 (DTPGH) and 162-165 (NKMD). Positions 162–165 (NKMD) are G4. Residues 200–202 (SAL) form a G5 region.

This sequence belongs to the TRAFAC class translation factor GTPase superfamily. Classic translation factor GTPase family. CysN/NodQ subfamily. Heterodimer composed of CysD, the smaller subunit, and CysN.

It carries out the reaction sulfate + ATP + H(+) = adenosine 5'-phosphosulfate + diphosphate. Its pathway is sulfur metabolism; hydrogen sulfide biosynthesis; sulfite from sulfate: step 1/3. Functionally, with CysD forms the ATP sulfurylase (ATPS) that catalyzes the adenylation of sulfate producing adenosine 5'-phosphosulfate (APS) and diphosphate, the first enzymatic step in sulfur assimilation pathway. APS synthesis involves the formation of a high-energy phosphoric-sulfuric acid anhydride bond driven by GTP hydrolysis by CysN coupled to ATP hydrolysis by CysD. In Buchnera aphidicola subsp. Acyrthosiphon pisum (strain Tuc7), this protein is Sulfate adenylyltransferase subunit 1.